A 132-amino-acid polypeptide reads, in one-letter code: Large ribosomal subunit protein bL17 (132 aa).

The protein belongs to the bacterial ribosomal protein bL17 family. Part of the 50S ribosomal subunit. Contacts protein L32.

The chain is Large ribosomal subunit protein bL17 from Shewanella sediminis (strain HAW-EB3).